The sequence spans 134 residues: Large ribosomal subunit protein uL16c (134 aa).

A disordered region spans residues 1–22 (MLSPKRTRFRKQHRGRMKGISH).

This sequence belongs to the universal ribosomal protein uL16 family. In terms of assembly, part of the 50S ribosomal subunit.

The protein localises to the plastid. It localises to the chloroplast. The sequence is that of Large ribosomal subunit protein uL16c from Nicotiana tabacum (Common tobacco).